The chain runs to 363 residues: Holliday junction branch migration complex subunit RuvB (363 aa).

The tract at residues 1–32 (MAIQTDSFAAAPAPSSGSTRRLISAAPTSPNE) is disordered. A compositionally biased stretch (low complexity) spans 7–18 (SFAAAPAPSSGS). The interval 13 to 200 (APSSGSTRRL…FGIVARLEFY (188 aa)) is large ATPase domain (RuvB-L). ATP contacts are provided by residues L39, R40, G81, K84, T85, T86, 147–149 (EDY), R190, Y200, and R237. T85 lines the Mg(2+) pocket. Positions 201–271 (TPEELVRIVT…IAELALTMLD (71 aa)) are small ATPAse domain (RuvB-S). The head domain (RuvB-H) stretch occupies residues 274 to 363 (PRGFDVMDRK…GPVGSDLFEG (90 aa)). DNA contacts are provided by R329 and R334.

The protein belongs to the RuvB family. Homohexamer. Forms an RuvA(8)-RuvB(12)-Holliday junction (HJ) complex. HJ DNA is sandwiched between 2 RuvA tetramers; dsDNA enters through RuvA and exits via RuvB. An RuvB hexamer assembles on each DNA strand where it exits the tetramer. Each RuvB hexamer is contacted by two RuvA subunits (via domain III) on 2 adjacent RuvB subunits; this complex drives branch migration. In the full resolvosome a probable DNA-RuvA(4)-RuvB(12)-RuvC(2) complex forms which resolves the HJ.

It localises to the cytoplasm. It carries out the reaction ATP + H2O = ADP + phosphate + H(+). In terms of biological role, the RuvA-RuvB-RuvC complex processes Holliday junction (HJ) DNA during genetic recombination and DNA repair, while the RuvA-RuvB complex plays an important role in the rescue of blocked DNA replication forks via replication fork reversal (RFR). RuvA specifically binds to HJ cruciform DNA, conferring on it an open structure. The RuvB hexamer acts as an ATP-dependent pump, pulling dsDNA into and through the RuvAB complex. RuvB forms 2 homohexamers on either side of HJ DNA bound by 1 or 2 RuvA tetramers; 4 subunits per hexamer contact DNA at a time. Coordinated motions by a converter formed by DNA-disengaged RuvB subunits stimulates ATP hydrolysis and nucleotide exchange. Immobilization of the converter enables RuvB to convert the ATP-contained energy into a lever motion, pulling 2 nucleotides of DNA out of the RuvA tetramer per ATP hydrolyzed, thus driving DNA branch migration. The RuvB motors rotate together with the DNA substrate, which together with the progressing nucleotide cycle form the mechanistic basis for DNA recombination by continuous HJ branch migration. Branch migration allows RuvC to scan DNA until it finds its consensus sequence, where it cleaves and resolves cruciform DNA. This chain is Holliday junction branch migration complex subunit RuvB, found in Leptothrix cholodnii (strain ATCC 51168 / LMG 8142 / SP-6) (Leptothrix discophora (strain SP-6)).